A 344-amino-acid polypeptide reads, in one-letter code: Dihydroorotase (344 aa).

Residues histidine 14 and histidine 16 each contribute to the Zn(2+) site. Residues 16 to 18 (HFR) and asparagine 42 each bind substrate. Residues lysine 100, histidine 137, and histidine 175 each contribute to the Zn(2+) site. Residue lysine 100 is modified to N6-carboxylysine. Position 137 (histidine 137) interacts with substrate. Leucine 220 provides a ligand contact to substrate. Aspartate 248 contacts Zn(2+). Residue aspartate 248 is part of the active site. Substrate-binding residues include histidine 252 and alanine 264.

This sequence belongs to the metallo-dependent hydrolases superfamily. DHOase family. Class II DHOase subfamily. Homodimer. The cofactor is Zn(2+).

It catalyses the reaction (S)-dihydroorotate + H2O = N-carbamoyl-L-aspartate + H(+). It participates in pyrimidine metabolism; UMP biosynthesis via de novo pathway; (S)-dihydroorotate from bicarbonate: step 3/3. Functionally, catalyzes the reversible cyclization of carbamoyl aspartate to dihydroorotate. The chain is Dihydroorotase from Alcanivorax borkumensis (strain ATCC 700651 / DSM 11573 / NCIMB 13689 / SK2).